The sequence spans 389 residues: Meiosis-specific protein MEI4 (389 aa).

An interaction with REC114 region spans residues 1–127 (MDIQPWYLKT…LSQHFVESTD (127 aa)).

This sequence belongs to the MEI4L family. As to quaternary structure, part of the MCD recombinosome complex, at least composed of IHO1, REC114 and MEI4. Forms a complex with REC114; the interaction is required for MEI4 stability. Interacts (via N-terminal domain) with REC114 (via C-terminal domain). Interacts with IHO1. Expressed in adult testis and brain and in embryonic ovary.

Its subcellular location is the chromosome. Its function is as follows. Required for DNA double-strand breaks (DSBs) formation in unsynapsed regions during meiotic recombination. Probably acts by forming a complex with IHO1 and REC114, which activates DSBs formation in unsynapsed regions, an essential step to ensure completion of synapsis. This chain is Meiosis-specific protein MEI4, found in Mus musculus (Mouse).